We begin with the raw amino-acid sequence, 143 residues long: Hemoglobin subunit alpha (143 aa).

The residue at position 1 (Ser1) is an N-acetylserine. Residues 1-143 (SLSATDKARV…LALALSEKYR (143 aa)) enclose the Globin domain. His60 is a binding site for O2. His89 contacts heme b.

The protein belongs to the globin family. As to quaternary structure, heterotetramer of two alpha chains and two beta chains. Red blood cells.

In terms of biological role, involved in oxygen transport from gills to the various peripheral tissues. In Leiostomus xanthurus (Spot), this protein is Hemoglobin subunit alpha (hba).